A 156-amino-acid chain; its full sequence is Small ribosomal subunit protein uS7 (156 aa).

It belongs to the universal ribosomal protein uS7 family. In terms of assembly, part of the 30S ribosomal subunit. Contacts proteins S9 and S11.

Functionally, one of the primary rRNA binding proteins, it binds directly to 16S rRNA where it nucleates assembly of the head domain of the 30S subunit. Is located at the subunit interface close to the decoding center, probably blocks exit of the E-site tRNA. The chain is Small ribosomal subunit protein uS7 from Limosilactobacillus fermentum (strain NBRC 3956 / LMG 18251) (Lactobacillus fermentum).